Reading from the N-terminus, the 336-residue chain is MKERIVNLETLDFETSQEVSLRPSLWEDFIGQEKIKSNLQISICAAKKRQESLDHMLFFGPPGLGKTSISHIIAKEMETNIKITAAPMIEKSGDLAAILTNLQAKDILFIDEIHRLSPAIEEVLYPAMEDFRLDIIIGSGPAAQTIKIDLPPFTLIGATTRAGMLSNPLRDRFGMSFRMQFYSPSELALIIKKAAIKLNQDIKEESADEIAKRSRGTPRIALRLLKRVRDFALVKNSSLMDLNITLHALNELGVNELGFDEADLAYLSLLANAQGRPVGLNTIAASMREDEGTIEDVIEPFLLANGYLERTAKGRIATPKTHALLKIPTLKSQTLF.

Residues 1–182 are large ATPase domain (RuvB-L); that stretch reads MKERIVNLET…FGMSFRMQFY (182 aa). ATP is bound by residues Leu21, Arg22, Gly63, Lys66, Thr67, Ser68, 129 to 131, Arg172, Tyr182, and Arg219; that span reads EDF. Thr67 is a Mg(2+) binding site. The tract at residues 183–253 is small ATPAse domain (RuvB-S); it reads SPSELALIIK…ITLHALNELG (71 aa). Residues 256–336 are head domain (RuvB-H); sequence ELGFDEADLA…IPTLKSQTLF (81 aa). Arg310 and Arg315 together coordinate DNA.

It belongs to the RuvB family. As to quaternary structure, homohexamer. Forms an RuvA(8)-RuvB(12)-Holliday junction (HJ) complex. HJ DNA is sandwiched between 2 RuvA tetramers; dsDNA enters through RuvA and exits via RuvB. An RuvB hexamer assembles on each DNA strand where it exits the tetramer. Each RuvB hexamer is contacted by two RuvA subunits (via domain III) on 2 adjacent RuvB subunits; this complex drives branch migration. In the full resolvosome a probable DNA-RuvA(4)-RuvB(12)-RuvC(2) complex forms which resolves the HJ.

Its subcellular location is the cytoplasm. The enzyme catalyses ATP + H2O = ADP + phosphate + H(+). Functionally, the RuvA-RuvB-RuvC complex processes Holliday junction (HJ) DNA during genetic recombination and DNA repair, while the RuvA-RuvB complex plays an important role in the rescue of blocked DNA replication forks via replication fork reversal (RFR). RuvA specifically binds to HJ cruciform DNA, conferring on it an open structure. The RuvB hexamer acts as an ATP-dependent pump, pulling dsDNA into and through the RuvAB complex. RuvB forms 2 homohexamers on either side of HJ DNA bound by 1 or 2 RuvA tetramers; 4 subunits per hexamer contact DNA at a time. Coordinated motions by a converter formed by DNA-disengaged RuvB subunits stimulates ATP hydrolysis and nucleotide exchange. Immobilization of the converter enables RuvB to convert the ATP-contained energy into a lever motion, pulling 2 nucleotides of DNA out of the RuvA tetramer per ATP hydrolyzed, thus driving DNA branch migration. The RuvB motors rotate together with the DNA substrate, which together with the progressing nucleotide cycle form the mechanistic basis for DNA recombination by continuous HJ branch migration. Branch migration allows RuvC to scan DNA until it finds its consensus sequence, where it cleaves and resolves cruciform DNA. The sequence is that of Holliday junction branch migration complex subunit RuvB from Helicobacter pylori (strain HPAG1).